Consider the following 457-residue polypeptide: Subtilisin-like serine protease Pen c 2 (457 aa).

The N-terminal stretch at 1 to 16 (MKGFLGLALLPLLTAA) is a signal peptide. The propeptide at 17–136 (SPVSVESIHN…IEKDSEVHHF (120 aa)) is removed in mature form. Residues 43 to 134 (SYIVVFKKHV…DYIEKDSEVH (92 aa)) form the Inhibitor I9 domain. Positions 146-457 (PWGLARISHR…YTDIVAQGGY (312 aa)) constitute a Peptidase S8 domain. Catalysis depends on charge relay system residues D182 and H214. Residues N244 and N284 are each glycosylated (N-linked (GlcNAc...) asparagine). The active-site Charge relay system is the S380. N447 is a glycosylation site (N-linked (GlcNAc...) asparagine).

It belongs to the peptidase S8 family.

In terms of biological role, serine protease. The protein is Subtilisin-like serine protease Pen c 2 of Penicillium citrinum.